Reading from the N-terminus, the 288-residue chain is Sulfur carrier protein FdhD (288 aa).

The Cysteine persulfide intermediate role is filled by Cys122. 268–273 serves as a coordination point for Mo-bis(molybdopterin guanine dinucleotide); sequence FVRGER.

Belongs to the FdhD family.

The protein localises to the cytoplasm. Required for formate dehydrogenase (FDH) activity. Acts as a sulfur carrier protein that transfers sulfur from IscS to the molybdenum cofactor prior to its insertion into FDH. This chain is Sulfur carrier protein FdhD, found in Anaeromyxobacter dehalogenans (strain 2CP-C).